The sequence spans 131 residues: Small ribosomal subunit protein uS8 (131 aa).

It belongs to the universal ribosomal protein uS8 family. In terms of assembly, part of the 30S ribosomal subunit. Contacts proteins S5 and S12.

Its function is as follows. One of the primary rRNA binding proteins, it binds directly to 16S rRNA central domain where it helps coordinate assembly of the platform of the 30S subunit. In Sorangium cellulosum (strain So ce56) (Polyangium cellulosum (strain So ce56)), this protein is Small ribosomal subunit protein uS8.